The primary structure comprises 500 residues: MSHSVPNALMTGADYLDSLRDGRQVYLNGERVADVTRHRAFRNACRSIAGLYDGLHGEQRDVLTRVDAQGRRSHRFFTPAQNAEDLLGAREAIGCWSRMTYGFMGRTPDYKAAFMSGLEAGAGFYGDYRHNACAWHRAFADRGLFLNHAIINPPLDRSKAIHEMRDVFVHVERETDQGIVVSGAKMLATGSAITNATFVAPVASAQMEAGKAEDFAVVFFARMDNPGLRLMCRPSYEERASSPFDYPLSSRFDENDSVLLFDKALIPWEDVLVYRDLRRATGFYAESGFANLYNFQSGIRLGVKLELMIGLLSLGVRANGTQSFRGIQAALGELIALQHLLQALTTAMARDPERNAAGSAVPRLEYANALRIQVPQIWKRVRELLESALGGAPLVTVSGAADLRDGEARRLVDSYYRGAELEPEQRLKLFKLIWDATGSEFGARHAVYESHYSGNAEQIRLDSLAWASRRGHLAYCEAMVQRCMADYDIHGWLRGPWQHD.

FAD serves as cofactor.

The protein operates within siderophore biosynthesis; pyoverdin biosynthesis. The protein is Pyoverdin chromophore biosynthetic protein PvcC (pvcC) of Pseudomonas aeruginosa (strain ATCC 15692 / DSM 22644 / CIP 104116 / JCM 14847 / LMG 12228 / 1C / PRS 101 / PAO1).